The chain runs to 94 residues: Elongation factor 1-beta (94 aa).

Belongs to the EF-1-beta/EF-1-delta family.

Promotes the exchange of GDP for GTP in EF-1-alpha/GDP, thus allowing the regeneration of EF-1-alpha/GTP that could then be used to form the ternary complex EF-1-alpha/GTP/AAtRNA. This chain is Elongation factor 1-beta, found in Ignicoccus hospitalis (strain KIN4/I / DSM 18386 / JCM 14125).